Here is a 124-residue protein sequence, read N- to C-terminus: MSITRYTKDHEYIRVEGETGTVGITDYAQSQLGDVVFVELPAIGKALTKGGEAAVVESVKAASEIYAPVSGEVVAVNEALAEAPGTVNEDAAGKGWFLQIKLADAKELDGLMDEAGYQDFLKTL.

The Lipoyl-binding domain occupies threonine 19–lysine 101. At lysine 60 the chain carries N6-lipoyllysine.

Belongs to the GcvH family. As to quaternary structure, the glycine cleavage system is composed of four proteins: P, T, L and H. Requires (R)-lipoate as cofactor.

In terms of biological role, the glycine cleavage system catalyzes the degradation of glycine. The H protein shuttles the methylamine group of glycine from the P protein to the T protein. The protein is Glycine cleavage system H protein of Beijerinckia indica subsp. indica (strain ATCC 9039 / DSM 1715 / NCIMB 8712).